The following is a 280-amino-acid chain: Truncated lectin 2 (280 aa).

A signal peptide spans 1–26 (MSSSNFSCILSISLTFFILLLNKVNS). Residues glutamate 148 and aspartate 150 each coordinate Mn(2+). Ca(2+)-binding residues include aspartate 150, phenylalanine 152, asparagine 154, and aspartate 158. Aspartate 158 provides a ligand contact to Mn(2+). Asparagine 163 carries an N-linked (GlcNAc...) asparagine glycan. A Mn(2+)-binding site is contributed by histidine 170. An N-linked (GlcNAc...) asparagine glycan is attached at asparagine 272.

It belongs to the leguminous lectin family.

This is Truncated lectin 2 (LEC2) from Medicago truncatula (Barrel medic).